The chain runs to 88 residues: Mitochondrial import inner membrane translocase subunit TIM9 (88 aa).

The Twin CX3C motif signature appears at C35–C59. Intrachain disulfides connect C35–C59 and C39–C55.

It belongs to the small Tim family. Heterohexamer; composed of 3 copies of TIM9 and 3 copies of TIM10, named soluble 70 kDa complex. Associates with the TIM22 complex, whose core is composed of TIM22 and TIM54. Interacts with the transmembrane regions of multi-pass transmembrane proteins in transit.

It localises to the mitochondrion inner membrane. Its function is as follows. Mitochondrial intermembrane chaperone that participates in the import and insertion of multi-pass transmembrane proteins into the mitochondrial inner membrane. Also required for the transfer of beta-barrel precursors from the TOM complex to the sorting and assembly machinery (SAM complex) of the outer membrane. Acts as a chaperone-like protein that protects the hydrophobic precursors from aggregation and guide them through the mitochondrial intermembrane space. The chain is Mitochondrial import inner membrane translocase subunit TIM9 (TIM9) from Debaryomyces hansenii (strain ATCC 36239 / CBS 767 / BCRC 21394 / JCM 1990 / NBRC 0083 / IGC 2968) (Yeast).